We begin with the raw amino-acid sequence, 373 residues long: DNA replication and repair protein RecF (373 aa).

30–37 (GENAQGKT) is an ATP binding site.

Belongs to the RecF family.

It localises to the cytoplasm. Its function is as follows. The RecF protein is involved in DNA metabolism; it is required for DNA replication and normal SOS inducibility. RecF binds preferentially to single-stranded, linear DNA. It also seems to bind ATP. The sequence is that of DNA replication and repair protein RecF from Bacillus cytotoxicus (strain DSM 22905 / CIP 110041 / 391-98 / NVH 391-98).